A 541-amino-acid chain; its full sequence is MHTLIKGVLEEILEEEVIIEYPKDREHGHYATPIAFNLAKVFKKSPLVIAEELALKISTHEKTQGLFDSIVACKGYINFTLSLDLLERFTQKALELKEQFGSQIKSERSQKIFLEFVSANPTGPLHIGHARGAVFGDSLAKIARFLGHEVLCEYYVNDMGSQIRLLGLSVWLAYREHVLKENVTYPEVFYKGEYIIEIAKKANNDLEPSLFKENEETIIEVLSGYAKDLMLLEIKDNLDALGIHFDSYASEKEIFKHKDAVFERLEKANALYEKDSKIWLKSSLYQDESDRVLIKEDKSYTYLTGDIVYHDEKFKQDYTKYINIWGADHHGYIARVKASLEFLGYDSNKLEVLLAQMVRLLKDNEPYKMSKRAGNFILIKDVIDDVGKDALRFIFLSKRLDTHLEFDVNTLKKQDSSNPIYYIHYANSRIHTMLEKSPFSKEEVLQTPLKNLNAEEKYLLFSTLSLPKAIESSFEEYGLQKMCEYAKTLASEFHRFYNAGKILDTPKAKELLKICLMVSLSLTNAFKLLGIEIKTKISAKD.

The 'HIGH' region motif lies at 119–129 (ANPTGPLHIGH).

It belongs to the class-I aminoacyl-tRNA synthetase family. Monomer.

It localises to the cytoplasm. It catalyses the reaction tRNA(Arg) + L-arginine + ATP = L-arginyl-tRNA(Arg) + AMP + diphosphate. This chain is Arginine--tRNA ligase, found in Helicobacter pylori (strain HPAG1).